Reading from the N-terminus, the 566-residue chain is Proline--tRNA ligase (566 aa).

Belongs to the class-II aminoacyl-tRNA synthetase family. ProS type 1 subfamily. Homodimer.

It is found in the cytoplasm. The enzyme catalyses tRNA(Pro) + L-proline + ATP = L-prolyl-tRNA(Pro) + AMP + diphosphate. In terms of biological role, catalyzes the attachment of proline to tRNA(Pro) in a two-step reaction: proline is first activated by ATP to form Pro-AMP and then transferred to the acceptor end of tRNA(Pro). As ProRS can inadvertently accommodate and process non-cognate amino acids such as alanine and cysteine, to avoid such errors it has two additional distinct editing activities against alanine. One activity is designated as 'pretransfer' editing and involves the tRNA(Pro)-independent hydrolysis of activated Ala-AMP. The other activity is designated 'posttransfer' editing and involves deacylation of mischarged Ala-tRNA(Pro). The misacylated Cys-tRNA(Pro) is not edited by ProRS. This chain is Proline--tRNA ligase, found in Bacillus anthracis (strain A0248).